Consider the following 301-residue polypeptide: 33 kDa chaperonin (301 aa).

2 disulfides stabilise this stretch: Cys-244-Cys-246 and Cys-277-Cys-280.

Belongs to the HSP33 family. Under oxidizing conditions two disulfide bonds are formed involving the reactive cysteines. Under reducing conditions zinc is bound to the reactive cysteines and the protein is inactive.

The protein localises to the cytoplasm. Its function is as follows. Redox regulated molecular chaperone. Protects both thermally unfolding and oxidatively damaged proteins from irreversible aggregation. Plays an important role in the bacterial defense system toward oxidative stress. This is 33 kDa chaperonin from Geobacter sulfurreducens (strain ATCC 51573 / DSM 12127 / PCA).